Consider the following 655-residue polypeptide: MKGASEEKLASVSNLVTVFENSRTPEAAPRGQRLEDVHHRPECRPPESPGPREKTNVGEAVGSEPRTVSRRYLNSLKNKLSSEAWRKSCQPVTLSGSGTQEPEKKIVQELLETEQAYVARLHLLDQVFFQELLKTARSSKAFPEDVVRVIFSNISSIYQFHSQFFLPELQRRLDDWTANPRIGDVIQKLAPFLKMYSEYVKNFERAAELLATWTDKSPLFQEVLTRIQSSEASGSLTLQHHMLEPVQRIPRYELLLKEYIQKLPAQAPDQADAQKALDMIFSAAQHSNAAITEMERLQDLWEVYQRLGLEDDIVDPSNTLLREGPVLKISFRRNDPMERYLFLFNNMLLYCVPRVIQVGAQFQVRTRIDVAGMKVRELMDAEFPHSFLVSGKQRTLELQARSQEEMISWMQAFQAAIDQIEKRNETFKAAAQGPEGDIQEQELQSEELGLRAPQWVRDKMVTMCMRCQEPFNALTRRRHHCRACGYVVCARCSDYRAELKYDDNRPNRVCLHCYAFLTGNVLPEAKEDKRRGILEKGSSATPDQSLMCSFLQLIGDKWGKSGPRGWCVIPRDDPLVLYVYAAPQDMRAHTSIPLLGYQVTVGPQGDPRVFQLQQSGQLYTFKAETEELKGRWVKAMERAASGWSPSWPNDGDLSD.

A phosphoserine mark is found at serine 11 and serine 48. Residues 18 to 64 (VFENSRTPEAAPRGQRLEDVHHRPECRPPESPGPREKTNVGEAVGSE) form a disordered region. Over residues 32 to 56 (QRLEDVHHRPECRPPESPGPREKTN) the composition is skewed to basic and acidic residues. In terms of domain architecture, DH spans 102–290 (PEKKIVQELL…FSAAQHSNAA (189 aa)). Positions 319–418 (TLLREGPVLK…WMQAFQAAID (100 aa)) constitute a PH 1 domain. The FYVE-type zinc-finger motif lies at 458–518 (DKMVTMCMRC…VCLHCYAFLT (61 aa)). Zn(2+)-binding residues include cysteine 464, cysteine 467, cysteine 481, cysteine 484, cysteine 489, cysteine 492, cysteine 510, and cysteine 513. In terms of domain architecture, PH 2 spans 544-641 (QSLMCSFLQL…WVKAMERAAS (98 aa)). Serine 654 is modified (phosphoserine).

It localises to the cytoplasm. The protein localises to the cytoskeleton. It is found in the nucleus. Its subcellular location is the early endosome. The protein resides in the early endosome membrane. It localises to the cell projection. The protein localises to the ruffle membrane. Its function is as follows. Activates CDC42, a member of the Ras-like family of Rho- and Rac proteins, by exchanging bound GDP for free GTP. Activates JNK1 via CDC42 but not RAC1. Binds to phosphatidylinositol 4,5-bisphosphate, phosphatidylinositol 3,4,5-trisphosphate, phosphatidylinositol 5-monophosphate, phosphatidylinositol 4-monophosphate and phosphatidylinositol 3-monophosphate. This Homo sapiens (Human) protein is FYVE, RhoGEF and PH domain-containing protein 2 (FGD2).